We begin with the raw amino-acid sequence, 337 residues long: Cathepsin L-like (337 aa).

The N-terminal stretch at 1–18 (MNRFILLALVAAVVAVNS) is a signal peptide. A propeptide spans 19–119 (AKLSRQIESA…SSFLAPFNVQ (101 aa)) (activation peptide). N-linked (GlcNAc...) asparagine glycosylation is present at Asn108. 3 disulfides stabilise this stretch: Cys141–Cys184, Cys175–Cys217, and Cys276–Cys326. The active site involves Cys144. Active-site residues include His283 and Asn304.

It belongs to the peptidase C1 family. In terms of tissue distribution, expressed in intestine, pharynx posterior bulb, hypodermis and cuticle (at protein level). Expressed in germ cells, developing oocytes, sheath cells surrounding germ cells and oocytes, and in the eggshell (at protein level).

It is found in the secreted. It localises to the cytoplasmic granule. Its subcellular location is the lysosome. The protein resides in the endosome. The protein localises to the cytoplasmic vesicle. It is found in the phagosome. The enzyme catalyses Specificity close to that of papain. As compared to cathepsin B, cathepsin L exhibits higher activity toward protein substrates, but has little activity on Z-Arg-Arg-NHMec, and no peptidyl-dipeptidase activity.. Its function is as follows. Cysteine protease which plays an essential role in the degradation of proteins in lysosomes. During early embryogenesis, maternally required for the proteolytic processing of yolk proteins in platelets, a lysosome-like structure where a slow and controlled degradation of yolk proteins occurs. In the gonad, required for the clearance of apoptotic germ cells in the engulfing cell phagolysosomes. In embryos, required for the degradation of endocytic and autophagic cargos. In embryos, may play a role in the degradation of lipid-containing droplets. Required for larval development. The polypeptide is Cathepsin L-like (Caenorhabditis elegans).